The primary structure comprises 137 residues: uncharacterized protein (137 aa).

This is an uncharacterized protein from Mycobacterium tuberculosis (strain ATCC 25618 / H37Rv).